We begin with the raw amino-acid sequence, 796 residues long: Quinoprotein glucose dehydrogenase (796 aa).

Residues 1–10 (MAINNTGSRR) are Cytoplasmic-facing. The chain crosses the membrane as a helical span at residues 11–37 (LLVTLTALFAALCGLYLLIGGGWLVAI). Topologically, residues 38–40 (GGS) are periplasmic. The helical transmembrane segment at 41 to 58 (WYYPIAGLVMLGVAWMLW) threads the bilayer. The Cytoplasmic segment spans residues 59-62 (RSKR). The helical transmembrane segment at 63-81 (AALWLYAALLLGTMIWGVW) threads the bilayer. Residues 82–95 (EVGFDFWALTPRSD) lie on the Periplasmic side of the membrane. A helical membrane pass occupies residues 96–110 (ILVFFGIWLILPFVW). At 111–118 (RRLVIPAS) the chain is on the cytoplasmic side. A helical transmembrane segment spans residues 119 to 141 (GAVAALVVALLISGGILTWAGFN). Over 142–796 (DPQEINGTLS…VAYALPDDVK (655 aa)) the chain is Periplasmic. The active-site Proton acceptor is Asp466.

It belongs to the bacterial PQQ dehydrogenase family. As to quaternary structure, monomer. The cofactor is pyrroloquinoline quinone.

Its subcellular location is the cell inner membrane. The enzyme catalyses a ubiquinone + D-glucose = D-glucono-1,5-lactone + a ubiquinol. GDH is probably involved in energy conservation rather than in sugar metabolism. The sequence is that of Quinoprotein glucose dehydrogenase (gcd) from Escherichia coli (strain K12).